The following is a 454-amino-acid chain: Chaperone SurA (454 aa).

Residues 1-28 form the signal peptide; sequence MKISSFRKGRWLGALALFAVVCWSMADA. 2 PpiC domains span residues 177–278 and 287–386; these read DREY…KMLA and LTKT…QVLE. Positions 431 to 454 are disordered; that stretch reads LDETPASPGEDAPAGEDSPETFMR. The span at 443–454 shows a compositional bias: acidic residues; it reads PAGEDSPETFMR.

The protein resides in the periplasm. The enzyme catalyses [protein]-peptidylproline (omega=180) = [protein]-peptidylproline (omega=0). In terms of biological role, chaperone involved in the correct folding and assembly of outer membrane proteins. Recognizes specific patterns of aromatic residues and the orientation of their side chains, which are found more frequently in integral outer membrane proteins. May act in both early periplasmic and late outer membrane-associated steps of protein maturation. This chain is Chaperone SurA, found in Methylococcus capsulatus (strain ATCC 33009 / NCIMB 11132 / Bath).